Consider the following 112-residue polypeptide: MTALSNMKCEACQADAPKVTDEELAELIRMIPDWGVQVRDGVMQLERIYKFKNFKLAMAFTNKLADLAEEEFHHPGIFTEWGKVTVTWWSHSIKGLHKNDFIMAAKTDQLLV.

Belongs to the pterin-4-alpha-carbinolamine dehydratase family.

It carries out the reaction (4aS,6R)-4a-hydroxy-L-erythro-5,6,7,8-tetrahydrobiopterin = (6R)-L-erythro-6,7-dihydrobiopterin + H2O. The chain is Putative pterin-4-alpha-carbinolamine dehydratase from Shewanella baltica (strain OS155 / ATCC BAA-1091).